We begin with the raw amino-acid sequence, 52 residues long: MWRIWKVFDPRRILIATAIWLIIIALTIHVILMTTERFNWLEGAPAAEYYSS.

The Cytoplasmic segment spans residues 1–12; the sequence is MWRIWKVFDPRR. The chain crosses the membrane as a helical span at residues 13–33; it reads ILIATAIWLIIIALTIHVILM. An a bacteriochlorophyll-binding site is contributed by H29. The Periplasmic segment spans residues 34–52; sequence TTERFNWLEGAPAAEYYSS.

Belongs to the antenna complex alpha subunit family. The core complex is formed by different alpha and beta chains, binding bacteriochlorophyll molecules, and arranged most probably in tetrameric structures disposed around the reaction center. The non-pigmented gamma chains may constitute additional components.

It is found in the cell inner membrane. Its function is as follows. Antenna complexes are light-harvesting systems, which transfer the excitation energy to the reaction centers. The sequence is that of Light-harvesting protein B800/830/1020 alpha-1 chain from Halorhodospira halochloris (Ectothiorhodospira halochloris).